The sequence spans 421 residues: CinA-like protein (421 aa).

It belongs to the CinA family.

This Synechococcus elongatus (strain ATCC 33912 / PCC 7942 / FACHB-805) (Anacystis nidulans R2) protein is CinA-like protein.